The sequence spans 304 residues: Phosphatidylinositol mannoside acyltransferase (304 aa).

H126 serves as the catalytic Proton acceptor. H126 and R164 together coordinate hexadecanoyl-CoA. The active site involves E200. The hexadecanoyl-CoA site is built by S206 and E229.

It belongs to the LpxL/LpxM/LpxP family. In terms of assembly, monomer.

It localises to the cell inner membrane. It catalyses the reaction a 2,6-O-bis(alpha-D-mannopyranosyl)-1-phosphatidyl-1D-myo-inositol + an acyl-CoA = a 2-O-(alpha-D-mannosyl)-6-O-(6-O-acyl-alpha-D-mannosyl)-1-phosphatidyl-1D-myo-inositol + CoA. The enzyme catalyses a 1,2-diacyl-sn-glycero-3-phospho-[alpha-D-mannopyranosyl-(1&lt;-&gt;6)-D-myo-inositol] + an acyl-CoA = a 1,2-diacyl-sn-glycero-3-phospho-[alpha-D-6-acyl-mannopyranosyl-(1&lt;-&gt;6)-D-myo-inositol] + CoA. The protein operates within phospholipid metabolism; phosphatidylinositol metabolism. Functionally, catalyzes the transfer of a palmitoyl moiety from palmitoyl-CoA to the 6-position of the mannose ring linked to the 2-position of myo-inositol in phosphatidyl-myo-inositol monomannoside (PIM1) or dimannoside (PIM2). This Mycolicibacterium smegmatis (strain ATCC 700084 / mc(2)155) (Mycobacterium smegmatis) protein is Phosphatidylinositol mannoside acyltransferase.